The chain runs to 904 residues: Envelope glycoprotein B (904 aa).

An N-terminal signal peptide occupies residues 1–30 (MHQGAPSWGRRWFVVWALLGLTLGVLVASA). Topologically, residues 31-774 (APTSPGTPGV…SGVSSFMSNP (744 aa)) are virion surface. The segment covering 32-52 (PTSPGTPGVAAATQAANGGPA) has biased composition (low complexity). Residues 32–88 (PTSPGTPGVAAATQAANGGPATPAPPPLGAAPTGDPKPKKNKKPKNPTPPRPAGDNA) form a disordered region. 2 N-linked (GlcNAc...) asparagine; by host glycosylation sites follow: Asn-87 and Asn-141. 5 disulfides stabilise this stretch: Cys-116-Cys-573, Cys-133-Cys-529, Cys-207-Cys-271, Cys-364-Cys-412, and Cys-596-Cys-633. 2 involved in fusion and/or binding to host membrane regions span residues 173-179 (VWFGHRY) and 258-265 (RVEAFHRY). N-linked (GlcNAc...) asparagine; by host glycosylation is found at Asn-398 and Asn-430. Residues 470–492 (REQSRKPPNPTPPPPGASANASV) are disordered. Over residues 476-485 (PPNPTPPPPG) the composition is skewed to pro residues. A glycan (N-linked (GlcNAc...) asparagine; by host) is linked at Asn-489. An N-linked (GlcNAc...) asparagine; by host glycan is attached at Asn-674. Residues 719-772 (IDTVIHADANAAMFAGLGAFFEGMGDLGRAVGKVVMGIVGGVVSAVSGVSSFMS) are hydrophobic membrane proximal region. The helical transmembrane segment at 775-795 (FGALAVGLLVLAGLAAAFFAF) threads the bilayer. Topologically, residues 796–904 (RYVMRLQSNP…KDGDADEDDL (109 aa)) are intravirion. The Golgi targeting signature appears at 849-852 (YMAL). The segment at 883 to 904 (KRRNTNYTQVPNKDGDADEDDL) is disordered. Phosphothreonine; by host is present on Thr-887. The short motif at 889–892 (YTQV) is the Internalization motif element.

It belongs to the herpesviridae glycoprotein B family. In terms of assembly, homotrimer; disulfide-linked. Interacts with host receptor MYH9/NMMHC-IIA. Interacts with host receptor MYH10/NMMHC-IIB. Binds to heparan sulfate proteoglycans. Interacts with gH/gL heterodimer. Interacts with the host coreceptor PILRA. In terms of processing, the cytoplasmic tail is phosphorylated by the viral kinase US3. Phosphorylation may be linked to a down-regulation of gB expression on cell surface. Ubiquitinated.

The protein localises to the virion membrane. Its subcellular location is the host cell membrane. It is found in the host endosome membrane. It localises to the host Golgi apparatus membrane. Its function is as follows. Envelope glycoprotein that forms spikes at the surface of virion envelope and binds to the host cell entry receptors MYH9/NMMHC-IIA and MYH10/NMMHC-IIB, promoting the virus entry into host cells. Essential for the initial attachment to heparan sulfate moieties of the host cell surface proteoglycans. Involved in fusion of viral and cellular membranes leading to virus entry into the host cell: following initial binding to its host cell entry receptors, membrane fusion is mediated by the fusion machinery composed at least of gB and the heterodimer gH/gL. May be involved in the fusion between the virion envelope and the outer nuclear membrane during virion egress. Also plays a role, together with gK, in virus-induced cell-to-cell fusion (syncytia formation). This is Envelope glycoprotein B from Human herpesvirus 1 (strain KOS) (HHV-1).